Consider the following 189-residue polypeptide: Transcription factor FapR (189 aa).

This sequence belongs to the FapR family.

Functionally, transcriptional factor involved in regulation of membrane lipid biosynthesis by repressing genes involved in fatty acid and phospholipid metabolism. This chain is Transcription factor FapR, found in Listeria monocytogenes serotype 4b (strain CLIP80459).